The sequence spans 313 residues: Porphobilinogen deaminase (313 aa).

An S-(dipyrrolylmethanemethyl)cysteine modification is found at cysteine 240.

The protein belongs to the HMBS family. Monomer. It depends on dipyrromethane as a cofactor.

The catalysed reaction is 4 porphobilinogen + H2O = hydroxymethylbilane + 4 NH4(+). It participates in porphyrin-containing compound metabolism; protoporphyrin-IX biosynthesis; coproporphyrinogen-III from 5-aminolevulinate: step 2/4. Tetrapolymerization of the monopyrrole PBG into the hydroxymethylbilane pre-uroporphyrinogen in several discrete steps. The sequence is that of Porphobilinogen deaminase from Moorella thermoacetica (strain ATCC 39073 / JCM 9320).